The sequence spans 666 residues: Probable potassium transport system protein Kup (666 aa).

12 consecutive transmembrane segments (helical) span residues Gly16 to Met36, Ile58 to Leu78, Pro100 to Thr120, Ile149 to Phe169, Ile173 to Met193, Ile221 to Leu241, Trp253 to Ala273, Val294 to Gly314, Leu343 to Phe363, Tyr373 to Ile393, Pro399 to Ala419, and Phe424 to Ile444.

It belongs to the HAK/KUP transporter (TC 2.A.72) family.

The protein localises to the cell membrane. The enzyme catalyses K(+)(in) + H(+)(in) = K(+)(out) + H(+)(out). In terms of biological role, transport of potassium into the cell. Likely operates as a K(+):H(+) symporter. This is Probable potassium transport system protein Kup from Streptococcus pyogenes serotype M3 (strain ATCC BAA-595 / MGAS315).